The chain runs to 194 residues: Peptidyl-tRNA hydrolase (194 aa).

Tyr16 is a tRNA binding site. The Proton acceptor role is filled by His21. TRNA-binding residues include Phe67, Asn69, and Asn115.

This sequence belongs to the PTH family. In terms of assembly, monomer.

The protein resides in the cytoplasm. The catalysed reaction is an N-acyl-L-alpha-aminoacyl-tRNA + H2O = an N-acyl-L-amino acid + a tRNA + H(+). Its function is as follows. Hydrolyzes ribosome-free peptidyl-tRNAs (with 1 or more amino acids incorporated), which drop off the ribosome during protein synthesis, or as a result of ribosome stalling. Functionally, catalyzes the release of premature peptidyl moieties from peptidyl-tRNA molecules trapped in stalled 50S ribosomal subunits, and thus maintains levels of free tRNAs and 50S ribosomes. The polypeptide is Peptidyl-tRNA hydrolase (Shigella boydii serotype 4 (strain Sb227)).